The sequence spans 66 residues: Photosystem II reaction center protein H (66 aa).

A helical transmembrane segment spans residues 27-47 (GAVPIMTVIGLLLLVFLVILL).

This sequence belongs to the PsbH family. As to quaternary structure, PSII is composed of 1 copy each of membrane proteins PsbA, PsbB, PsbC, PsbD, PsbE, PsbF, PsbH, PsbI, PsbJ, PsbK, PsbL, PsbM, PsbT, PsbX, PsbY, Psb30/Ycf12, peripheral proteins PsbO, CyanoQ (PsbQ), PsbU, PsbV and a large number of cofactors. It forms dimeric complexes.

The protein localises to the cellular thylakoid membrane. Functionally, one of the components of the core complex of photosystem II (PSII), required for its stability and/or assembly. PSII is a light-driven water:plastoquinone oxidoreductase that uses light energy to abstract electrons from H(2)O, generating O(2) and a proton gradient subsequently used for ATP formation. It consists of a core antenna complex that captures photons, and an electron transfer chain that converts photonic excitation into a charge separation. This Prochlorococcus marinus (strain MIT 9515) protein is Photosystem II reaction center protein H.